The sequence spans 328 residues: GATA transcription factor 17 (328 aa).

Residues 1-68 (MSGHHEAKPY…EEYEGGEGVP (68 aa)) form a disordered region. Over residues 14–29 (RGPAPADEEAAPAAAA) the composition is skewed to low complexity. Acidic residues-rich tracts occupy residues 30-39 (DEAEAEAEVE) and 47-63 (EQEYEEGEEGEEEEYEG). The region spanning 100–135 (PHVASNTLTLSFQGEVYVFESVSAERVQAVLLLLGG) is the Tify domain. One can recognise a CCT domain in the interval 161–203 (RMASLMRFREKRKERNFDKKIRYTVRKEVALRMQRNRGQFTSS). The segment at 198 to 231 (GQFTSSKSKAEEATSVITSSEGSPNWGAVEGRPP) is disordered. Residues 236-263 (CHHCGISAASTPMMRRGPDGPRTLCNAC) form a GATA-type zinc finger.

It belongs to the type IV zinc-finger family. Class C subfamily.

It is found in the nucleus. Functionally, transcriptional activator that specifically binds 5'-GATA-3' or 5'-GAT-3' motifs within gene promoters. The polypeptide is GATA transcription factor 17 (Oryza sativa subsp. japonica (Rice)).